Here is a 513-residue protein sequence, read N- to C-terminus: Ribonuclease Y (513 aa).

Residues 4 to 24 (TTSLIIAILAGILGIVIGFFF) form a helical membrane-spanning segment. Positions 78 to 106 (KSRLKEISRQEDRLNSKEENLERKNASLE) are disordered. In terms of domain architecture, KH spans 203-288 (TVSVVNLPND…EMVEKARKDV (86 aa)). In terms of domain architecture, HD spans 329–422 (VLKHSIEVSN…VQSADAISAA (94 aa)).

This sequence belongs to the RNase Y family.

It is found in the cell membrane. Endoribonuclease that initiates mRNA decay. The sequence is that of Ribonuclease Y from Finegoldia magna (strain ATCC 29328 / DSM 20472 / WAL 2508) (Peptostreptococcus magnus).